The primary structure comprises 307 residues: Ribosomal RNA small subunit methyltransferase H (307 aa).

Residues 33–35 (GGY), aspartate 51, phenylalanine 82, aspartate 96, and glutamine 103 contribute to the S-adenosyl-L-methionine site.

Belongs to the methyltransferase superfamily. RsmH family.

Its subcellular location is the cytoplasm. It catalyses the reaction cytidine(1402) in 16S rRNA + S-adenosyl-L-methionine = N(4)-methylcytidine(1402) in 16S rRNA + S-adenosyl-L-homocysteine + H(+). Its function is as follows. Specifically methylates the N4 position of cytidine in position 1402 (C1402) of 16S rRNA. The chain is Ribosomal RNA small subunit methyltransferase H from Rickettsia rickettsii (strain Iowa).